The following is a 238-amino-acid chain: Ribonuclease 3 (238 aa).

The 131-residue stretch at 4 to 134 folds into the RNase III domain; the sequence is PRQALLDAFG…LLGAIYLHHG (131 aa). Residue Glu44 participates in Mg(2+) binding. Asp48 is an active-site residue. Mg(2+) contacts are provided by Asp120 and Glu123. Glu123 is a catalytic residue. Positions 161–229 constitute a DRBM domain; it reads DWKTSLQELT…ASAAWKALDV (69 aa).

This sequence belongs to the ribonuclease III family. As to quaternary structure, homodimer. The cofactor is Mg(2+).

It localises to the cytoplasm. It catalyses the reaction Endonucleolytic cleavage to 5'-phosphomonoester.. Its function is as follows. Digests double-stranded RNA. Involved in the processing of primary rRNA transcript to yield the immediate precursors to the large and small rRNAs (23S and 16S). Processes some mRNAs, and tRNAs when they are encoded in the rRNA operon. Processes pre-crRNA and tracrRNA of type II CRISPR loci if present in the organism. In Mycobacterium leprae (strain TN), this protein is Ribonuclease 3.